The primary structure comprises 185 residues: Potassium-transporting ATPase KdpC subunit (185 aa).

A helical membrane pass occupies residues 11–31 (LALLMTLVTGALYPLAVTGIA).

It belongs to the KdpC family. As to quaternary structure, the system is composed of three essential subunits: KdpA, KdpB and KdpC.

Its subcellular location is the cell inner membrane. Part of the high-affinity ATP-driven potassium transport (or Kdp) system, which catalyzes the hydrolysis of ATP coupled with the electrogenic transport of potassium into the cytoplasm. This subunit acts as a catalytic chaperone that increases the ATP-binding affinity of the ATP-hydrolyzing subunit KdpB by the formation of a transient KdpB/KdpC/ATP ternary complex. The protein is Potassium-transporting ATPase KdpC subunit of Pseudomonas putida (strain ATCC 47054 / DSM 6125 / CFBP 8728 / NCIMB 11950 / KT2440).